The following is a 562-amino-acid chain: Putative transport protein NT01EI_2530 (562 aa).

6 consecutive transmembrane segments (helical) span residues 8 to 28 (LLTGNYILLLFVVLALGLCLG), 32 to 52 (LGSIQLGNSIGVLVVSLLLGQ), 66 to 86 (FMLFIFCVGVEAGPNFFSIFF), 94 to 114 (MLALVMVASALCIALGLGKLF), 118 to 138 (IGLTAGMLAGSMTSTPVLVGA), and 158 to 178 (HLSLGYALTYLVGLVSLIFGA). RCK C-terminal domains follow at residues 202 to 288 (LDND…SFRN) and 290 to 373 (KEVF…RIGF). Helical transmembrane passes span 383–403 (LLAFCAFFIIGLMIGLITFQF), 406–426 (FSFGIGNAAGLLFAGIMLGFL), 443–463 (MVKEFGLMVFMAGVGLSAGAG), 477–497 (IAGLIVSLVPVVICFLFGAFV), and 541–561 (IANVLLTLAGTLIIIVWPGVV).

This sequence belongs to the AAE transporter (TC 2.A.81) family. YbjL subfamily.

Its subcellular location is the cell membrane. In Edwardsiella ictaluri (strain 93-146), this protein is Putative transport protein NT01EI_2530.